The following is a 204-amino-acid chain: Dual specificity protein phosphatase 18 (204 aa).

Residues 19 to 160 enclose the Tyrosine-protein phosphatase domain; the sequence is GLSQITKSLF…LIHYEFQLFG (142 aa). The tract at residues 95–141 is sufficient for mitochondrial localization; the sequence is MKQGRTLLHCAAGVSRSAALCLAYLMKYHVMSLLDAHAWTKSRRPII. Catalysis depends on Cys104, which acts as the Phosphocysteine intermediate.

The protein belongs to the protein-tyrosine phosphatase family. Non-receptor class dual specificity subfamily.

It localises to the cytoplasm. Its subcellular location is the nucleus. It is found in the mitochondrion inner membrane. It catalyses the reaction O-phospho-L-tyrosyl-[protein] + H2O = L-tyrosyl-[protein] + phosphate. The catalysed reaction is O-phospho-L-seryl-[protein] + H2O = L-seryl-[protein] + phosphate. It carries out the reaction O-phospho-L-threonyl-[protein] + H2O = L-threonyl-[protein] + phosphate. Functionally, can dephosphorylate single and diphosphorylated synthetic MAPK peptides, with preference for the phosphotyrosine and diphosphorylated forms over phosphothreonine. In vitro, dephosphorylates p-nitrophenyl phosphate (pNPP). This chain is Dual specificity protein phosphatase 18 (Dusp18), found in Rattus norvegicus (Rat).